Reading from the N-terminus, the 667-residue chain is UvrABC system protein C (667 aa).

Residues 43–122 enclose the GIY-YIG domain; that stretch reads AEPGCYLMRD…IKNQQPHFNV (80 aa). Positions 232–267 constitute a UVR domain; that stretch reads QELKVLLEKQMERYSDRMDYESAANIRDQIKGLEQL.

This sequence belongs to the UvrC family. Interacts with UvrB in an incision complex.

It is found in the cytoplasm. Functionally, the UvrABC repair system catalyzes the recognition and processing of DNA lesions. UvrC both incises the 5' and 3' sides of the lesion. The N-terminal half is responsible for the 3' incision and the C-terminal half is responsible for the 5' incision. This Prochlorococcus marinus (strain MIT 9313) protein is UvrABC system protein C.